Consider the following 587-residue polypeptide: Proline-rich protein 14 (587 aa).

Residue Met1 is modified to N-acetylmethionine. Residues 1 to 11 are compositionally biased toward polar residues; the sequence is MDLPGDSSTPG. Disordered stretches follow at residues 1-48, 65-152, and 181-241; these read MDLP…EKAS, VPLE…HQPT, and ARRA…RPRL. The tract at residues 1 to 135 is sufficient for heterochromatin association in interphase and chromatin association in anaphase; the sequence is MDLPGDSSTP…TPRRQSRTTP (135 aa). The interval 85 to 378 is required for the interaction with GRB2 and sufficient to promote the phosphorylation of AKT and cell proliferation; sequence SVRSQPPASP…MAKAPPPPRP (294 aa). The tract at residues 136 to 365 is required for nuclear lamina association; sequence GPDEGPSQKV…RPRPRRHTVG (230 aa). Residues 200 to 214 are compositionally biased toward low complexity; the sequence is LPAPSRPSALSANPL. A compositionally biased stretch (pro residues) spans 215-234; that stretch reads ASPPPAPDPVLEPPSTPPPS. Ser277 carries the phosphoserine modification. Disordered regions lie at residues 290–444 and 524–587; these read EAGQ…IGKV and FRDS…PHRT. Residues 314 to 325 show a composition bias toward polar residues; sequence AQDQNPSATLTK. Residues 337-356 show a composition bias toward pro residues; the sequence is LGPPGPDPCSWPPVPAPSSR. Low complexity predominate over residues 398-410; the sequence is TSCSSTASTSSFS. The required for nuclear localization stretch occupies residues 519–536; it reads RRTVEFRDSSLPRSRRPS. Residues 538–548 are compositionally biased toward low complexity; the sequence is GARATAGRTLP. The span at 572-581 shows a compositional bias: acidic residues; the sequence is LLEEEEEGDQ.

Interacts (via proline-rich region) with GRB2 (via SH3 domain 2). Interacts (via N-terminus) with CBX5.

The protein resides in the chromosome. It is found in the nucleus. The protein localises to the nucleus lamina. It localises to the nucleoplasm. Functionally, functions in tethering peripheral heterochromatin to the nuclear lamina during interphase, possibly through the interaction with heterochromatin protein CBX5/HP1 alpha. Might play a role in reattaching heterochromatin to the nuclear lamina at mitotic exit. Promotes myoblast differentiation during skeletal myogenesis, possibly by stimulating transcription factor MyoD activity via binding to CBX5/HP1 alpha. Involved in the positive regulation of the PI3K-Akt-mTOR signaling pathway and in promoting cell proliferation, possibly via binding to GRB2. This Bos taurus (Bovine) protein is Proline-rich protein 14 (PRR14).